The primary structure comprises 297 residues: Guanylate kinase (297 aa).

Residues 5–184 (GKVIIISGPS…AVSKITDILI (180 aa)) enclose the Guanylate kinase-like domain. 12–19 (GPSGVGKG) provides a ligand contact to ATP. Residues 205-297 (ENIVDQKYTY…IKQRSDFSGD (93 aa)) form a unknown region.

It belongs to the guanylate kinase family.

The protein localises to the cytoplasm. It catalyses the reaction GMP + ATP = GDP + ADP. In terms of biological role, essential for recycling GMP and indirectly, cGMP. In Mesoplasma florum (strain ATCC 33453 / NBRC 100688 / NCTC 11704 / L1) (Acholeplasma florum), this protein is Guanylate kinase (gmk).